The chain runs to 210 residues: Large ribosomal subunit protein uL3 (210 aa).

Residues 139 to 165 are disordered; that stretch reads AEKVHRSPGSIGHATFPGKVFKGKKMP.

This sequence belongs to the universal ribosomal protein uL3 family. Part of the 50S ribosomal subunit. Forms a cluster with proteins L14 and L19.

In terms of biological role, one of the primary rRNA binding proteins, it binds directly near the 3'-end of the 23S rRNA, where it nucleates assembly of the 50S subunit. In Maridesulfovibrio salexigens (strain ATCC 14822 / DSM 2638 / NCIMB 8403 / VKM B-1763) (Desulfovibrio salexigens), this protein is Large ribosomal subunit protein uL3.